We begin with the raw amino-acid sequence, 293 residues long: 4-diphosphocytidyl-2-C-methyl-D-erythritol kinase (293 aa).

Residue Lys16 is part of the active site. Pro99–Ser109 is a binding site for ATP. Asp141 is an active-site residue.

Belongs to the GHMP kinase family. IspE subfamily.

The enzyme catalyses 4-CDP-2-C-methyl-D-erythritol + ATP = 4-CDP-2-C-methyl-D-erythritol 2-phosphate + ADP + H(+). The protein operates within isoprenoid biosynthesis; isopentenyl diphosphate biosynthesis via DXP pathway; isopentenyl diphosphate from 1-deoxy-D-xylulose 5-phosphate: step 3/6. Catalyzes the phosphorylation of the position 2 hydroxy group of 4-diphosphocytidyl-2C-methyl-D-erythritol. The chain is 4-diphosphocytidyl-2-C-methyl-D-erythritol kinase from Burkholderia mallei (strain NCTC 10247).